The following is a 252-amino-acid chain: tRNA (guanine-N(7)-)-methyltransferase (252 aa).

Residues E51, D76, N103, and D125 each coordinate S-adenosyl-L-methionine. D125 is an active-site residue. Substrate contacts are provided by residues K129, D159, and 199–202 (TYYE).

This sequence belongs to the class I-like SAM-binding methyltransferase superfamily. TrmB family.

It carries out the reaction guanosine(46) in tRNA + S-adenosyl-L-methionine = N(7)-methylguanosine(46) in tRNA + S-adenosyl-L-homocysteine. It functions in the pathway tRNA modification; N(7)-methylguanine-tRNA biosynthesis. Its function is as follows. Catalyzes the formation of N(7)-methylguanine at position 46 (m7G46) in tRNA. In Bacteroides fragilis (strain YCH46), this protein is tRNA (guanine-N(7)-)-methyltransferase.